The chain runs to 731 residues: 1,4-alpha-glucan branching enzyme GlgB (731 aa).

Aspartate 411 serves as the catalytic Nucleophile. The active-site Proton donor is the glutamate 464.

Belongs to the glycosyl hydrolase 13 family. GlgB subfamily. As to quaternary structure, monomer.

The enzyme catalyses Transfers a segment of a (1-&gt;4)-alpha-D-glucan chain to a primary hydroxy group in a similar glucan chain.. It functions in the pathway glycan biosynthesis; glycogen biosynthesis. In terms of biological role, catalyzes the formation of the alpha-1,6-glucosidic linkages in glycogen by scission of a 1,4-alpha-linked oligosaccharide from growing alpha-1,4-glucan chains and the subsequent attachment of the oligosaccharide to the alpha-1,6 position. The polypeptide is 1,4-alpha-glucan branching enzyme GlgB (Mycobacterium bovis (strain ATCC BAA-935 / AF2122/97)).